The following is a 499-amino-acid chain: Alpha-amylase B (499 aa).

Positions 1-21 are cleaved as a signal peptide; it reads MMVAWWSLFLYGLQVAAPALA. Cysteine 51 and cysteine 59 form a disulfide bridge. Positions 56 and 104 each coordinate substrate. Position 142 (asparagine 142) interacts with Ca(2+). Histidine 143 is a binding site for substrate. Residues cysteine 171 and cysteine 185 are joined by a disulfide bond. Ca(2+)-binding residues include glutamate 183 and aspartate 196. Asparagine 218 carries N-linked (GlcNAc...) asparagine glycosylation. Substrate is bound at residue arginine 225. 3 residues coordinate Ca(2+): aspartate 227, histidine 231, and glutamate 251. Aspartate 227 serves as the catalytic Nucleophile. 230 to 231 is a substrate binding site; that stretch reads KH. The active-site Proton donor is the glutamate 251. Glycine 255 lines the substrate pocket. Cysteine 261 and cysteine 304 form a disulfide bridge. Substrate is bound by residues aspartate 318 and arginine 365. Cysteine 461 and cysteine 496 are oxidised to a cystine.

The protein belongs to the glycosyl hydrolase 13 family. The cofactor is Ca(2+).

It catalyses the reaction Endohydrolysis of (1-&gt;4)-alpha-D-glucosidic linkages in polysaccharides containing three or more (1-&gt;4)-alpha-linked D-glucose units.. This Aspergillus awamori (Black koji mold) protein is Alpha-amylase B (amyB).